Reading from the N-terminus, the 154-residue chain is MAKQEQNIVYLYCDGACRGNPGPGGWGVLLRYNQHERQLHGGVANTTNNQMELTAAIEGLKSLKKPCQVVVTTDSQYLRRGITEWLPVWKRRGWRTSNKKPVKNQPLWETLEREVERHTIVWHWVKGHSGHAENEIADELANRGIDEVLKRGAQ.

Residues 5–146 (EQNIVYLYCD…ADELANRGID (142 aa)) enclose the RNase H type-1 domain. Residues Asp-14, Glu-52, Asp-74, and Asp-138 each contribute to the Mg(2+) site.

The protein belongs to the RNase H family. In terms of assembly, monomer. Mg(2+) serves as cofactor.

The protein localises to the cytoplasm. It catalyses the reaction Endonucleolytic cleavage to 5'-phosphomonoester.. Its function is as follows. Endonuclease that specifically degrades the RNA of RNA-DNA hybrids. This is Ribonuclease H from Coxiella burnetii (strain CbuG_Q212) (Coxiella burnetii (strain Q212)).